The chain runs to 290 residues: MKVIVLLLVLAVMQPVIQSQPFPGTEELPMTRRPPKKELEYWCTYAKSCDFCWNCRHGVCKNKVFEKHPLIKKNDYIQICRVSRYNDRCSYFTDSRIRRFHIMSCTNPTYYDWFDELMQVKEDRVIDVENIKHTCLCMIATIALIGYIRKQYSRMQLQAATRLLIFLGLYVLLGILMTNIIMNLPLSTDNPMQMRRPPERDLKFWCTYAKHCDFCWTCKDGMCKNKVFSDHPIITQNDYIVNCTVSRWHDRCMYEAHFRIHYQHNMNCSQPKDLEWFIELKRHLINQDDL.

The next 3 helical transmembrane spans lie at 1–19 (MKVIVLLLVLAVMQPVIQS), 128–148 (VENIKHTCLCMIATIALIGYI), and 163–183 (LLIFLGLYVLLGILMTNIIMN). N-linked (GlcNAc...) asparagine; by host glycosylation is found at asparagine 242 and asparagine 267.

It belongs to the asfivirus MGF 110 family.

The protein resides in the host membrane. Its function is as follows. Plays a role in virus cell tropism, and may be required for efficient virus replication in macrophages. The polypeptide is Protein MGF 110-9L (Ornithodoros (relapsing fever ticks)).